The following is a 434-amino-acid chain: 3-phosphoshikimate 1-carboxyvinyltransferase (434 aa).

The 3-phosphoshikimate site is built by K22, S23, and R27. A phosphoenolpyruvate-binding site is contributed by K22. The phosphoenolpyruvate site is built by G93 and R121. Positions 168, 169, 170, 199, 320, and 347 each coordinate 3-phosphoshikimate. Q170 serves as a coordination point for phosphoenolpyruvate. The active-site Proton acceptor is D320. Positions 351, 394, and 419 each coordinate phosphoenolpyruvate.

It belongs to the EPSP synthase family. Monomer.

The protein resides in the cytoplasm. It catalyses the reaction 3-phosphoshikimate + phosphoenolpyruvate = 5-O-(1-carboxyvinyl)-3-phosphoshikimate + phosphate. It functions in the pathway metabolic intermediate biosynthesis; chorismate biosynthesis; chorismate from D-erythrose 4-phosphate and phosphoenolpyruvate: step 6/7. Functionally, catalyzes the transfer of the enolpyruvyl moiety of phosphoenolpyruvate (PEP) to the 5-hydroxyl of shikimate-3-phosphate (S3P) to produce enolpyruvyl shikimate-3-phosphate and inorganic phosphate. This chain is 3-phosphoshikimate 1-carboxyvinyltransferase, found in Burkholderia cenocepacia (strain HI2424).